A 78-amino-acid polypeptide reads, in one-letter code: Acyl carrier protein (78 aa).

In terms of domain architecture, Carrier spans 2–77 (SDTVERVKKI…DAVKFIDKAS (76 aa)). Serine 37 bears the O-(pantetheine 4'-phosphoryl)serine mark.

Belongs to the acyl carrier protein (ACP) family. 4'-phosphopantetheine is transferred from CoA to a specific serine of apo-ACP by AcpS. This modification is essential for activity because fatty acids are bound in thioester linkage to the sulfhydryl of the prosthetic group.

It localises to the cytoplasm. It participates in lipid metabolism; fatty acid biosynthesis. In terms of biological role, carrier of the growing fatty acid chain in fatty acid biosynthesis. In Bartonella henselae (strain ATCC 49882 / DSM 28221 / CCUG 30454 / Houston 1) (Rochalimaea henselae), this protein is Acyl carrier protein.